The chain runs to 119 residues: Lamprin 1.8-10 (119 aa).

The first 19 residues, 1–19 (MAATMQALLVIALLHLATA), serve as a signal peptide directing secretion. Repeat copies occupy residues 41–45 (GGLGY), 46–50 (GGLGY), 51–55 (GGLGY), 56–60 (GGLGV), 61–65 (AGLGY), 66–70 (GGLGY), and 86–90 (GGLGY). The 7 X 5 AA approximate repeats stretch occupies residues 41 to 90 (GGLGYGGLGYGGLGYGGLGVAGLGYGGLGYPGAALGGAYTHHAALGGLGY).

As to quaternary structure, the polymeric lamprin chains self-aggregate to form fibers and have secondary structures particularly rich in beta-sheets and in beta-turns.

The protein resides in the secreted. It localises to the extracellular space. It is found in the extracellular matrix. Its function is as follows. Self-aggregating protein that is part of the soluble form of lamprin. This chain is Lamprin 1.8-10, found in Petromyzon marinus (Sea lamprey).